The primary structure comprises 564 residues: Phomacin cluster regulator phmR (564 aa).

The segment at residues 33-64 is a DNA-binding region (zn(2)-C6 fungal-type); the sequence is CDRCRGHKLRCIRDQMTVDSPCQRCRKAREKC. Disordered regions lie at residues 68-93, 152-197, and 252-278; these read SSTRPVPARLNRSSQGHKLPGATSSA, DFAD…NPFL, and PIHPPTMASSHRTHSTASNDSSKDSTT. 2 stretches are compositionally biased toward polar residues: residues 182–192 and 258–278; these read ITPTSQGTTAV and MASSHRTHSTASNDSSKDSTT.

It is found in the nucleus. Its function is as follows. Transcription factor that specifically regulates the expression of the gene cluster that mediates the biosynthesis of the mycotoxins phomacins, leucine-derived cytochalasans with potent actin polymerization-inhibitory activities and monocot-specific antigerminative activities. The chain is Phomacin cluster regulator phmR from Phaeosphaeria nodorum (strain SN15 / ATCC MYA-4574 / FGSC 10173) (Glume blotch fungus).